Reading from the N-terminus, the 293-residue chain is 33 kDa chaperonin (293 aa).

Intrachain disulfides connect C237–C239 and C271–C274.

This sequence belongs to the HSP33 family. In terms of processing, under oxidizing conditions two disulfide bonds are formed involving the reactive cysteines. Under reducing conditions zinc is bound to the reactive cysteines and the protein is inactive.

The protein resides in the cytoplasm. Functionally, redox regulated molecular chaperone. Protects both thermally unfolding and oxidatively damaged proteins from irreversible aggregation. Plays an important role in the bacterial defense system toward oxidative stress. This is 33 kDa chaperonin from Haemophilus influenzae (strain PittGG).